Here is a 179-residue protein sequence, read N- to C-terminus: Shikimate kinase (179 aa).

22–27 contributes to the ATP binding site; that stretch reads GTGKSS. Serine 26 provides a ligand contact to Mg(2+). Substrate-binding residues include aspartate 44, arginine 68, and glycine 90. Arginine 128 contributes to the ATP binding site. Arginine 147 is a binding site for substrate.

Belongs to the shikimate kinase family. As to quaternary structure, monomer. Mg(2+) serves as cofactor.

The protein localises to the cytoplasm. The catalysed reaction is shikimate + ATP = 3-phosphoshikimate + ADP + H(+). It participates in metabolic intermediate biosynthesis; chorismate biosynthesis; chorismate from D-erythrose 4-phosphate and phosphoenolpyruvate: step 5/7. Its function is as follows. Catalyzes the specific phosphorylation of the 3-hydroxyl group of shikimic acid using ATP as a cosubstrate. This is Shikimate kinase from Geobacter metallireducens (strain ATCC 53774 / DSM 7210 / GS-15).